The primary structure comprises 314 residues: Acetaldehyde dehydrogenase 1 (314 aa).

15–18 (SGNI) provides a ligand contact to NAD(+). The active-site Acyl-thioester intermediate is the Cys-133. Residues 164–172 (SAGPGTRAN) and Asn-291 contribute to the NAD(+) site.

The protein belongs to the acetaldehyde dehydrogenase family.

The enzyme catalyses acetaldehyde + NAD(+) + CoA = acetyl-CoA + NADH + H(+). This chain is Acetaldehyde dehydrogenase 1, found in Paraburkholderia xenovorans (strain LB400).